We begin with the raw amino-acid sequence, 67 residues long: Large ribosomal subunit protein eL24 (67 aa).

Residues Cys7, Cys10, Cys33, and Cys37 each contribute to the Zn(2+) site. Residues Cys7–Cys37 form a C4-type zinc finger.

The protein belongs to the eukaryotic ribosomal protein eL24 family. In terms of assembly, part of the 50S ribosomal subunit. Forms a cluster with proteins L3 and L14. Requires Zn(2+) as cofactor.

In terms of biological role, binds to the 23S rRNA. The polypeptide is Large ribosomal subunit protein eL24 (Thermococcus sibiricus (strain DSM 12597 / MM 739)).